A 237-amino-acid chain; its full sequence is Ribosomal RNA small subunit methyltransferase G (237 aa).

S-adenosyl-L-methionine-binding positions include glycine 72, leucine 77, 123-124 (AE), and arginine 138. The interval 210–237 (TALETGTKAAPSRSPRKPGGRKKRGRKR) is disordered. A compositionally biased stretch (basic residues) spans 223-237 (SPRKPGGRKKRGRKR).

This sequence belongs to the methyltransferase superfamily. RNA methyltransferase RsmG family.

The protein resides in the cytoplasm. Specifically methylates the N7 position of guanine in position 518 of 16S rRNA. This Thermobifida fusca (strain YX) protein is Ribosomal RNA small subunit methyltransferase G.